The sequence spans 487 residues: N-succinylglutamate 5-semialdehyde dehydrogenase (487 aa).

Residue 221-226 (GSSDTG) coordinates NAD(+). Residues Glu-244 and Cys-278 contribute to the active site.

This sequence belongs to the aldehyde dehydrogenase family. AstD subfamily.

It carries out the reaction N-succinyl-L-glutamate 5-semialdehyde + NAD(+) + H2O = N-succinyl-L-glutamate + NADH + 2 H(+). Its pathway is amino-acid degradation; L-arginine degradation via AST pathway; L-glutamate and succinate from L-arginine: step 4/5. Its function is as follows. Catalyzes the NAD-dependent reduction of succinylglutamate semialdehyde into succinylglutamate. The sequence is that of N-succinylglutamate 5-semialdehyde dehydrogenase from Burkholderia multivorans (strain ATCC 17616 / 249).